The primary structure comprises 592 residues: Aspartate--tRNA(Asp/Asn) ligase (592 aa).

Residue Glu175 participates in L-aspartate binding. The interval 199–202 is aspartate; that stretch reads QLFK. Arg221 provides a ligand contact to L-aspartate. ATP is bound by residues 221–223 and Gln230; that span reads RDE. Position 450 (His450) interacts with L-aspartate. Residue Glu483 coordinates ATP. Arg490 contacts L-aspartate. 535–538 lines the ATP pocket; the sequence is GLDR.

The protein belongs to the class-II aminoacyl-tRNA synthetase family. Type 1 subfamily. Homodimer.

Its subcellular location is the cytoplasm. It catalyses the reaction tRNA(Asx) + L-aspartate + ATP = L-aspartyl-tRNA(Asx) + AMP + diphosphate. Functionally, aspartyl-tRNA synthetase with relaxed tRNA specificity since it is able to aspartylate not only its cognate tRNA(Asp) but also tRNA(Asn). Reaction proceeds in two steps: L-aspartate is first activated by ATP to form Asp-AMP and then transferred to the acceptor end of tRNA(Asp/Asn). This chain is Aspartate--tRNA(Asp/Asn) ligase, found in Acinetobacter baylyi (strain ATCC 33305 / BD413 / ADP1).